Reading from the N-terminus, the 189-residue chain is Autophagy receptor ATG45 (189 aa).

Positions 1-96 are binds glycogen; the sequence is MSNFLLVIPE…TNNILHFKDN (96 aa). A required for sequestration into autophagosomes region spans residues 97–189; sequence EASQLMDIPL…AKKVKTYWNK (93 aa). Residue S107 is modified to Phosphoserine. The ATG8 interaction motif (AIM) signature appears at 127 to 130; the sequence is YVNL. At S172 the chain carries Phosphoserine. Residues 176-187 are may facilitate interactions with the autophagosome membrane; the sequence is LMCIAKKVKTYW.

Interacts with ATG8.

It localises to the cytoplasm. It is found in the cytosol. The protein resides in the cytoplasmic vesicle. Its subcellular location is the autophagosome. Autophagy receptor for glycogen that facilitates the sequestration of glycogen assemblies into autophagosomes as part of bulk autophagy; the autophagy of glycogen (glycophagy) is stimulated during prolonged nitrogen starvation and during sporulation. In Saccharomyces cerevisiae (strain ATCC 204508 / S288c) (Baker's yeast), this protein is Autophagy receptor ATG45.